The sequence spans 85 residues: U4-theraphotoxin-Hhn1a (85 aa).

The signal sequence occupies residues 1 to 22 (MKVTLIAILTCAAVLVLHTTAA). Positions 23–48 (EELEAESQLMKVGMPDTELAAVDEER) are excised as a propeptide. Cystine bridges form between cysteine 52–cysteine 66, cysteine 56–cysteine 77, and cysteine 71–cysteine 82.

Belongs to the neurotoxin 12 (Hwtx-2) family. 02 (Hwtx-2) subfamily. Monomer. As to expression, expressed by the venom gland.

Its subcellular location is the secreted. Neurotoxin active on both insects and mammals. The chain is U4-theraphotoxin-Hhn1a from Cyriopagopus hainanus (Chinese bird spider).